The sequence spans 458 residues: Bifunctional protein GlmU (458 aa).

A pyrophosphorylase region spans residues 1–228; that stretch reads MHPKLDILIL…DWEVLGVNSK (228 aa). UDP-N-acetyl-alpha-D-glucosamine contacts are provided by residues 10 to 13, lysine 24, glutamine 75, 80 to 81, 102 to 104, glycine 139, glutamate 153, asparagine 168, and asparagine 226; these read LAAG, GT, and YGD. A Mg(2+)-binding site is contributed by aspartate 104. Asparagine 226 is a Mg(2+) binding site. Residues 229 to 249 form a linker region; it reads AQLAELERIHQNEVAQRLLAD. The segment at 250–458 is N-acetyltransferase; it reads GVTLMDPARL…KRPIKPKKEG (209 aa). UDP-N-acetyl-alpha-D-glucosamine-binding residues include arginine 332 and lysine 350. Residue histidine 362 is the Proton acceptor of the active site. The UDP-N-acetyl-alpha-D-glucosamine site is built by tyrosine 365 and asparagine 376. Residues alanine 379, 385–386, serine 404, alanine 422, and arginine 439 contribute to the acetyl-CoA site; that span reads NY.

In the N-terminal section; belongs to the N-acetylglucosamine-1-phosphate uridyltransferase family. The protein in the C-terminal section; belongs to the transferase hexapeptide repeat family. Homotrimer. Mg(2+) is required as a cofactor.

The protein resides in the cytoplasm. It catalyses the reaction alpha-D-glucosamine 1-phosphate + acetyl-CoA = N-acetyl-alpha-D-glucosamine 1-phosphate + CoA + H(+). The catalysed reaction is N-acetyl-alpha-D-glucosamine 1-phosphate + UTP + H(+) = UDP-N-acetyl-alpha-D-glucosamine + diphosphate. It participates in nucleotide-sugar biosynthesis; UDP-N-acetyl-alpha-D-glucosamine biosynthesis; N-acetyl-alpha-D-glucosamine 1-phosphate from alpha-D-glucosamine 6-phosphate (route II): step 2/2. It functions in the pathway nucleotide-sugar biosynthesis; UDP-N-acetyl-alpha-D-glucosamine biosynthesis; UDP-N-acetyl-alpha-D-glucosamine from N-acetyl-alpha-D-glucosamine 1-phosphate: step 1/1. The protein operates within bacterial outer membrane biogenesis; LPS lipid A biosynthesis. Catalyzes the last two sequential reactions in the de novo biosynthetic pathway for UDP-N-acetylglucosamine (UDP-GlcNAc). The C-terminal domain catalyzes the transfer of acetyl group from acetyl coenzyme A to glucosamine-1-phosphate (GlcN-1-P) to produce N-acetylglucosamine-1-phosphate (GlcNAc-1-P), which is converted into UDP-GlcNAc by the transfer of uridine 5-monophosphate (from uridine 5-triphosphate), a reaction catalyzed by the N-terminal domain. This Thiobacillus denitrificans (strain ATCC 25259 / T1) protein is Bifunctional protein GlmU.